A 484-amino-acid chain; its full sequence is PTS system MurNAc-GlcNAc-specific EIIBC component (484 aa).

The PTS EIIB type-1 domain maps to 5-87 (QQLAERIIAA…AELSGVKLGD (83 aa)). The Phosphocysteine intermediate; for EIIB activity role is filled by Cys27. A PTS EIIC type-1 domain is found at 130-484 (KSIANIFIPL…AMRQTDLLGD (355 aa)). A run of 10 helical transmembrane segments spans residues 135-155 (IFIP…IAAV), 160-180 (MVAG…FNVI), 200-220 (FGAT…TGIA), 234-254 (LQPG…LSIV), 274-294 (IALL…AGFV), 305-325 (IISI…LPLV), 349-369 (LLPI…ALWV), 384-404 (ALPV…TLPL), 408-428 (FLTA…IGHI), and 450-470 (LGYI…TYLF).

It is found in the cell membrane. The catalysed reaction is N-acetyl-beta-D-muramate-(1-&gt;4)-N-acetyl-D-glucosamine(out) + N(pros)-phospho-L-histidyl-[protein] = 6-phospho-N-acetyl-beta-D-muramate-(1-&gt;4)-N-acetyl-D-glucosamine(in) + L-histidyl-[protein]. It participates in cell wall biogenesis; peptidoglycan recycling. Functionally, the phosphoenolpyruvate-dependent sugar phosphotransferase system (sugar PTS), a major carbohydrate active transport system, catalyzes the phosphorylation of incoming sugar substrates concomitantly with their translocation across the cell membrane. This system is involved in the uptake and phosphorylation of MurNAc-GlcNAc, the principle peptidoglycan turnover product of S.aureus, yielding cytoplasmic MurNAc 6P-GlcNAc. The chain is PTS system MurNAc-GlcNAc-specific EIIBC component from Staphylococcus aureus (strain bovine RF122 / ET3-1).